The primary structure comprises 54 residues: Relaxin (54 aa).

Glutamine 1 is modified (pyrrolidone carboxylic acid). Cystine bridges form between cysteine 13–cysteine 41, cysteine 25–cysteine 54, and cysteine 40–cysteine 45.

It belongs to the insulin family. In terms of assembly, heterodimer of a B chain and an A chain linked by two disulfide bonds.

The protein resides in the secreted. In terms of biological role, the function of relaxin in an oviparous species is not yet known. The polypeptide is Relaxin (Squalus acanthias (Spiny dogfish)).